The sequence spans 416 residues: Glutamyl-tRNA reductase (416 aa).

Substrate-binding positions include 51–54 (TCNR), S110, 115–117 (EPQ), and Q121. The active-site Nucleophile is the C52. An NADP(+)-binding site is contributed by 190-195 (GAGQTG).

This sequence belongs to the glutamyl-tRNA reductase family. As to quaternary structure, homodimer.

The enzyme catalyses (S)-4-amino-5-oxopentanoate + tRNA(Glu) + NADP(+) = L-glutamyl-tRNA(Glu) + NADPH + H(+). It functions in the pathway porphyrin-containing compound metabolism; protoporphyrin-IX biosynthesis; 5-aminolevulinate from L-glutamyl-tRNA(Glu): step 1/2. Its function is as follows. Catalyzes the NADPH-dependent reduction of glutamyl-tRNA(Glu) to glutamate 1-semialdehyde (GSA). The sequence is that of Glutamyl-tRNA reductase from Francisella tularensis subsp. tularensis (strain FSC 198).